The following is a 1195-amino-acid chain: ATP-dependent DNA helicase Hel308 (1195 aa).

ATP contacts are provided by residues Q20 and 39–46 (IPTASGKT). Residues 26–196 (RGLLDKNKNF…WLNAELIVDD (171 aa)) enclose the Helicase ATP-binding domain. A DEAH box motif is present at residues 143 to 146 (DEIH). A DOD-type homing endonuclease domain is found at 451–584 (FIGYFIGDGY…LQFVLLRFGI (134 aa)).

The protein belongs to the helicase family. Hel308 subfamily. Monomer. Post-translationally, this protein undergoes a protein self splicing that involves a post-translational excision of the intervening region (intein) followed by peptide ligation.

It carries out the reaction Couples ATP hydrolysis with the unwinding of duplex DNA by translocating in the 3'-5' direction.. The enzyme catalyses ATP + H2O = ADP + phosphate + H(+). Its function is as follows. DNA-dependent ATPase and 3'-5' DNA helicase that may be involved in repair of stalled replication forks. This is ATP-dependent DNA helicase Hel308 from Methanocaldococcus jannaschii (strain ATCC 43067 / DSM 2661 / JAL-1 / JCM 10045 / NBRC 100440) (Methanococcus jannaschii).